The primary structure comprises 707 residues: Polyribonucleotide nucleotidyltransferase (707 aa).

Asp486 and Asp492 together coordinate Mg(2+). In terms of domain architecture, KH spans 553–612 (PRIHKIKINPEKIKDVIGKGGSVIRMLTEETGTIIEIEDDGTIKISATIGEKAKNAIRRI). Residues 622-690 (GRIYSGKVTR…RQGRLRLSIK (69 aa)) form the S1 motif domain.

The protein belongs to the polyribonucleotide nucleotidyltransferase family. Component of the RNA degradosome, which is a multiprotein complex involved in RNA processing and mRNA degradation. The cofactor is Mg(2+).

Its subcellular location is the cytoplasm. The enzyme catalyses RNA(n+1) + phosphate = RNA(n) + a ribonucleoside 5'-diphosphate. Its function is as follows. Involved in mRNA degradation. Catalyzes the phosphorolysis of single-stranded polyribonucleotides processively in the 3'- to 5'-direction. The polypeptide is Polyribonucleotide nucleotidyltransferase (Buchnera aphidicola subsp. Schizaphis graminum (strain Sg)).